A 939-amino-acid chain; its full sequence is AP-2 complex subunit alpha (939 aa).

Over residues 623 to 633 the composition is skewed to basic and acidic residues; that stretch reads RVPENEIRESK. Residues 623 to 660 form a disordered region; the sequence is RVPENEIRESKSPAPTSGPGSVLQNNVHVNNSHSKLNN. Residues 635–660 are compositionally biased toward polar residues; it reads PAPTSGPGSVLQNNVHVNNSHSKLNN.

Belongs to the adapter complexes large subunit family. In terms of assembly, adaptor protein complex 2 (AP-2) is a heterotetramer composed of two large adaptins (alpha-type and beta-type subunits), a medium adaptin (mu-type subunit AP50) and a small adaptin (sigma-type subunit AP17).

It is found in the cell membrane. It localises to the membrane. Its subcellular location is the coated pit. Its function is as follows. Adaptins are components of the adapter complexes which link clathrin to receptors in coated vesicles. Clathrin-associated protein complexes are believed to interact with the cytoplasmic tails of membrane proteins, leading to their selection and concentration. Alpha adaptin is a subunit of the plasma membrane adapter. This chain is AP-2 complex subunit alpha, found in Drosophila pseudoobscura pseudoobscura (Fruit fly).